The chain runs to 299 residues: Inosose dehydratase (299 aa).

This sequence belongs to the IolE/MocC family. It depends on glutathione as a cofactor. Requires Co(2+) as cofactor. Mn(2+) is required as a cofactor.

It carries out the reaction scyllo-inosose = 3D-3,5/4-trihydroxycyclohexane-1,2-dione + H2O. Catalyzes the dehydration of inosose (2-keto-myo-inositol, 2KMI or 2,4,6/3,5-pentahydroxycyclohexanone) to 3D-(3,5/4)-trihydroxycyclohexane-1,2-dione (D-2,3-diketo-4-deoxy-epi-inositol). The chain is Inosose dehydratase from Klebsiella pneumoniae (strain 342).